Reading from the N-terminus, the 54-residue chain is MEISLLNIIACPLCQGQLLLQEQELVCQIDALAYPVRTNIPVLLVSEARNILVK.

It belongs to the UPF0434 family.

The chain is UPF0434 protein BCI_0256 from Baumannia cicadellinicola subsp. Homalodisca coagulata.